Here is a 421-residue protein sequence, read N- to C-terminus: 4-hydroxy-3-methylbut-2-en-1-yl diphosphate synthase (flavodoxin) (421 aa).

Residues Cys-298, Cys-301, Cys-344, and Glu-351 each coordinate [4Fe-4S] cluster.

It belongs to the IspG family. Requires [4Fe-4S] cluster as cofactor.

It catalyses the reaction (2E)-4-hydroxy-3-methylbut-2-enyl diphosphate + oxidized [flavodoxin] + H2O + 2 H(+) = 2-C-methyl-D-erythritol 2,4-cyclic diphosphate + reduced [flavodoxin]. The protein operates within isoprenoid biosynthesis; isopentenyl diphosphate biosynthesis via DXP pathway; isopentenyl diphosphate from 1-deoxy-D-xylulose 5-phosphate: step 5/6. In terms of biological role, converts 2C-methyl-D-erythritol 2,4-cyclodiphosphate (ME-2,4cPP) into 1-hydroxy-2-methyl-2-(E)-butenyl 4-diphosphate. In Neisseria meningitidis serogroup C / serotype 2a (strain ATCC 700532 / DSM 15464 / FAM18), this protein is 4-hydroxy-3-methylbut-2-en-1-yl diphosphate synthase (flavodoxin).